The chain runs to 513 residues: ATP synthase subunit alpha (513 aa).

169–176 (GDRQTGKT) lines the ATP pocket.

The protein belongs to the ATPase alpha/beta chains family. As to quaternary structure, F-type ATPases have 2 components, CF(1) - the catalytic core - and CF(0) - the membrane proton channel. CF(1) has five subunits: alpha(3), beta(3), gamma(1), delta(1), epsilon(1). CF(0) has three main subunits: a(1), b(2) and c(9-12). The alpha and beta chains form an alternating ring which encloses part of the gamma chain. CF(1) is attached to CF(0) by a central stalk formed by the gamma and epsilon chains, while a peripheral stalk is formed by the delta and b chains.

It is found in the cell inner membrane. The catalysed reaction is ATP + H2O + 4 H(+)(in) = ADP + phosphate + 5 H(+)(out). Produces ATP from ADP in the presence of a proton gradient across the membrane. The alpha chain is a regulatory subunit. The polypeptide is ATP synthase subunit alpha (Bordetella pertussis (strain Tohama I / ATCC BAA-589 / NCTC 13251)).